Consider the following 553-residue polypeptide: Glutamate--tRNA ligase (553 aa).

A 'HIGH' region motif is present at residues 103 to 113 (PNPSGPLHIGH).

It belongs to the class-I aminoacyl-tRNA synthetase family. Glutamate--tRNA ligase type 2 subfamily.

The protein localises to the cytoplasm. The catalysed reaction is tRNA(Glu) + L-glutamate + ATP = L-glutamyl-tRNA(Glu) + AMP + diphosphate. Catalyzes the attachment of glutamate to tRNA(Glu) in a two-step reaction: glutamate is first activated by ATP to form Glu-AMP and then transferred to the acceptor end of tRNA(Glu). This Methanothermobacter thermautotrophicus (strain ATCC 29096 / DSM 1053 / JCM 10044 / NBRC 100330 / Delta H) (Methanobacterium thermoautotrophicum) protein is Glutamate--tRNA ligase.